We begin with the raw amino-acid sequence, 391 residues long: Chalcone synthase 2 (391 aa).

C164 is a catalytic residue.

The protein belongs to the thiolase-like superfamily. Chalcone/stilbene synthases family.

The enzyme catalyses (E)-4-coumaroyl-CoA + 3 malonyl-CoA + 3 H(+) = 2',4,4',6'-tetrahydroxychalcone + 3 CO2 + 4 CoA. The protein operates within secondary metabolite biosynthesis; flavonoid biosynthesis. The primary product of this enzyme is 4,2',4',6'-tetrahydroxychalcone (also termed naringenin-chalcone or chalcone) which can under specific conditions spontaneously isomerize into naringenin. This is Chalcone synthase 2 (CHS2) from Citrus sinensis (Sweet orange).